The chain runs to 307 residues: Mitochondrial brown fat uncoupling protein 1 (307 aa).

Over 1–10 (MVSSTTSEVQ) the chain is Mitochondrial intermembrane. A helical membrane pass occupies residues 11–32 (PTMGVKIFSAGVSACLADIITF). 3 Solcar repeats span residues 11-102 (PTMG…VQEY), 111-201 (ASLG…MKGA), and 210-295 (DDVP…LKKE). The Mitochondrial matrix segment spans residues 33–73 (PLDTAKVRLQIQGEGQASSTIRYKGVLGTITTLAKTEGLPK). Lysine 56 is a fatty acid 16:0 binding site. The helical transmembrane segment at 74-96 (LYSGLPAGIQRQISFASLRIGLY) threads the bilayer. Residues 97-116 (DTVQEYFSSGRETPASLGSK) are Mitochondrial intermembrane-facing. The chain crosses the membrane as a helical span at residues 117–133 (ISAGLMTGGVAVFIGQP). The Mitochondrial matrix portion of the chain corresponds to 134–178 (TEVVKVRMQAQSHLHGIKPRYTGTYNAYRVIATTESLSTLWKGTT). A helical membrane pass occupies residues 179–195 (PNLMRNVIINCTELVTY). Over 196-212 (DLMKGALVNHHILADDV) the chain is Mitochondrial intermembrane. Residues 213-232 (PCHLLSALVAGFCTTLLASP) form a helical membrane-spanning segment. Over 233-266 (VDVVKTRFINSLPGQYPSVPSCAMTMYTKEGPAA) the chain is Mitochondrial matrix. Cysteine 254 bears the Cysteine sulfenic acid (-SOH) mark. The helical transmembrane segment at 267–289 (FFKGFAPSFLRLGSWNVIMFVCF) threads the bilayer. Fatty acid 16:0 is bound at residue lysine 269. The Mitochondrial intermembrane portion of the chain corresponds to 290–307 (EQLKKELMKSRQTVDCTT).

The protein belongs to the mitochondrial carrier (TC 2.A.29) family. In terms of assembly, most probably functions as a monomer. Binds one purine nucleotide per monomer. However, has also been suggested to function as a homodimer or a homotetramer. Tightly associates with cardiolipin in the mitochondrion inner membrane; may stabilize and regulate its activity. May undergo ubiquitin-mediated proteasomal degradation. In terms of processing, may undergo sulfenylation upon cold exposure. May increase the sensitivity of UCP1 thermogenic function to the activation by noradrenaline probably through structural effects. As to expression, brown adipose tissue.

The protein localises to the mitochondrion inner membrane. The enzyme catalyses H(+)(in) = H(+)(out). With respect to regulation, has no constitutive proton transporter activity and has to be activated by long-chain fatty acids/LCFAs. Inhibited by purine nucleotides. Both purine nucleotides and LCFAs bind the cytosolic side of the transporter and directly compete to activate or inhibit it. Activated by noradrenaline and reactive oxygen species. Despite lacking canonical translational encoding for selenocysteine, a small pool of the protein has been observed to selectively incorporate selenocysteine at 'Cys-254'. Selenocysteine-modified protein is highly sensitive to redox modification and may constitute a pool of protein highly sensitive to activation by elevated levels of reactive oxygen species (ROS). Its function is as follows. Mitochondrial protein responsible for thermogenic respiration, a specialized capacity of brown adipose tissue and beige fat that participates in non-shivering adaptive thermogenesis to temperature and diet variations and more generally to the regulation of energy balance. Functions as a long-chain fatty acid/LCFA and proton symporter, simultaneously transporting one LCFA and one proton through the inner mitochondrial membrane. However, LCFAs remaining associated with the transporter via their hydrophobic tails, it results in an apparent transport of protons activated by LCFAs. Thereby, dissipates the mitochondrial proton gradient and converts the energy of substrate oxydation into heat instead of ATP. Regulates the production of reactive oxygen species/ROS by mitochondria. In Rattus norvegicus (Rat), this protein is Mitochondrial brown fat uncoupling protein 1.